Here is a 293-residue protein sequence, read N- to C-terminus: ATP synthase gamma chain (293 aa).

This sequence belongs to the ATPase gamma chain family. In terms of assembly, F-type ATPases have 2 components, CF(1) - the catalytic core - and CF(0) - the membrane proton channel. CF(1) has five subunits: alpha(3), beta(3), gamma(1), delta(1), epsilon(1). CF(0) has three main subunits: a, b and c.

It is found in the cell inner membrane. Produces ATP from ADP in the presence of a proton gradient across the membrane. The gamma chain is believed to be important in regulating ATPase activity and the flow of protons through the CF(0) complex. This Sinorhizobium fredii (strain NBRC 101917 / NGR234) protein is ATP synthase gamma chain.